We begin with the raw amino-acid sequence, 122 residues long: MSLLKEFKEFAVKGNVLDLAVAVVIGAAFGKIVSSLVADVIMPIIGLIFGNTDFASSWAYKGIKYGVFIQSIVDFLIVAGAIFLFIKLINKITRKSEVEEVEEAVEENTVLLTEIRDLLRSK.

2 helical membrane-spanning segments follow: residues 29–49 and 66–86; these read FGKI…GLIF and GVFI…FLFI.

Belongs to the MscL family. As to quaternary structure, homopentamer.

The protein localises to the cell membrane. Functionally, channel that opens in response to stretch forces in the membrane lipid bilayer. May participate in the regulation of osmotic pressure changes within the cell. In Macrococcus caseolyticus (strain JCSC5402) (Macrococcoides caseolyticum), this protein is Large-conductance mechanosensitive channel.